A 521-amino-acid polypeptide reads, in one-letter code: Melanopsin (521 aa).

Over 1–71 the chain is Extracellular; that stretch reads MDSPSGPRVL…VDVPDHAHYT (71 aa). N30 and N34 each carry an N-linked (GlcNAc...) asparagine glycan. The helical transmembrane segment at 72-92 threads the bilayer; it reads LGTVILLVGLTGMLGNLTVIY. Residues 93 to 106 lie on the Cytoplasmic side of the membrane; it reads TFCRNRGLRTPANM. The chain crosses the membrane as a helical span at residues 107 to 127; that stretch reads FIINLAVSDFLMSVTQAPVFF. Over 128–143 the chain is Extracellular; the sequence is ASSLYKKWLFGETGCE. C142 and C220 are disulfide-bonded. The chain crosses the membrane as a helical span at residues 144–164; sequence FYAFCGAVFGITSMITLTAIA. Residues 165–187 lie on the Cytoplasmic side of the membrane; sequence MDRYLVITRPLATIGRGSKRRTA. The helical transmembrane segment at 188-208 threads the bilayer; it reads LVLLGVWLYALAWSLPPFFGW. The Extracellular portion of the chain corresponds to 209 to 237; sequence SAYVPEGLLTSCSWDYMTFTPQVRAYTML. A helical membrane pass occupies residues 238-258; sequence LFCFVFFLPLLIIIFCYIFIF. The Cytoplasmic portion of the chain corresponds to 259 to 293; that stretch reads RAIRETGRACEGCGESPLRQRRQWQRLQSEWKMAK. The helical transmembrane segment at 294–314 threads the bilayer; that stretch reads VALIVILLFVLSWAPYSTVAL. Residues 315–329 are Extracellular-facing; that stretch reads VAFAGYSHILTPYMS. The chain crosses the membrane as a helical span at residues 330-350; sequence SVPAVIAKASAIHNPIIYAIT. N6-(retinylidene)lysine is present on K337. At 351-521 the chain is on the cytoplasmic side; sequence HPKYRVAIAQ…LEDDVTLRHL (171 aa). The segment at 445–486 is disordered; the sequence is GELKASSSPQVQRSKTPKVPGPSTCRPMKGQGARPSSLRGDQ. Over residues 449–458 the composition is skewed to polar residues; sequence ASSSPQVQRS.

This sequence belongs to the G-protein coupled receptor 1 family. Opsin subfamily. As to expression, expressed in the retinal pigment epithelium and ganglion cell layer (at protein level). Also expressed in amacrine cell layers of the retina. Weakly expressed in vibrissae, and tail. Observed with processes in the outer strata of inner plexiform layer (IPL) close to the inner nuclear layer (INL) or is found to be bistratified with processes located both in the inner (ON) or outer (OFF) layers of the IPL (at protein level). A second population of isoform 1 is identified in processes which are confined to the inner layer of the IPL near to the ganglion cell layer (GCL) (at protein level). In terms of tissue distribution, about 40 times more abundant than isoform 1 in the retina (at protein level). Isoform 2 is involved in processes localized to the outer IPL or is bistratified with processes in both the inner and outer layers of the IPL (at protein level). Isoform 2 is absent in the processes confined only to the inner layer of the IPL (at protein level).

The protein localises to the cell membrane. Its subcellular location is the cell projection. The protein resides in the axon. It localises to the dendrite. It is found in the perikaryon. Its function is as follows. Photoreceptor that binds cis-retinaldehydes. Contributes to pupillar reflex, photoentrainment and other non-image forming responses to light. May be involved in the optokinetic visual tracking response. May be involved in the regulation of retinal hyaloid vessel growth and regression. This Mus musculus (Mouse) protein is Melanopsin (Opn4).